Reading from the N-terminus, the 187-residue chain is Adenylate kinase (187 aa).

10-15 provides a ligand contact to ATP; the sequence is GSGKGT. Positions 30–59 are NMP; that stretch reads STGDLLRAEVAAGSPLGLKAKEVMARGDLV. AMP contacts are provided by residues threonine 31, arginine 36, 57-59, 85-88, and glutamine 92; these read DLV and GYPR. An LID region spans residues 126 to 136; sequence GRAKAEGREDD. Arginine 127 contributes to the ATP binding site. Residues arginine 133 and arginine 144 each coordinate AMP. An ATP-binding site is contributed by glycine 172.

It belongs to the adenylate kinase family. As to quaternary structure, monomer.

It is found in the cytoplasm. The catalysed reaction is AMP + ATP = 2 ADP. Its pathway is purine metabolism; AMP biosynthesis via salvage pathway; AMP from ADP: step 1/1. Its function is as follows. Catalyzes the reversible transfer of the terminal phosphate group between ATP and AMP. Plays an important role in cellular energy homeostasis and in adenine nucleotide metabolism. The protein is Adenylate kinase of Xanthomonas axonopodis pv. citri (strain 306).